A 365-amino-acid chain; its full sequence is Chorismate synthase (365 aa).

NADP(+) is bound by residues R48 and R54. FMN contacts are provided by residues 131-133 (RSS), 243-244 (NA), G288, 303-307 (KPTSS), and R329.

It belongs to the chorismate synthase family. As to quaternary structure, homotetramer. FMNH2 is required as a cofactor.

It catalyses the reaction 5-O-(1-carboxyvinyl)-3-phosphoshikimate = chorismate + phosphate. The protein operates within metabolic intermediate biosynthesis; chorismate biosynthesis; chorismate from D-erythrose 4-phosphate and phosphoenolpyruvate: step 7/7. Functionally, catalyzes the anti-1,4-elimination of the C-3 phosphate and the C-6 proR hydrogen from 5-enolpyruvylshikimate-3-phosphate (EPSP) to yield chorismate, which is the branch point compound that serves as the starting substrate for the three terminal pathways of aromatic amino acid biosynthesis. This reaction introduces a second double bond into the aromatic ring system. This Sinorhizobium medicae (strain WSM419) (Ensifer medicae) protein is Chorismate synthase.